A 411-amino-acid chain; its full sequence is Glucose-1-phosphate adenylyltransferase (411 aa).

Alpha-D-glucose 1-phosphate contacts are provided by residues Gly-162, Glu-177–Lys-178, and Ser-195.

The protein belongs to the bacterial/plant glucose-1-phosphate adenylyltransferase family. As to quaternary structure, homotetramer.

It catalyses the reaction alpha-D-glucose 1-phosphate + ATP + H(+) = ADP-alpha-D-glucose + diphosphate. It functions in the pathway glycan biosynthesis; glycogen biosynthesis. In terms of biological role, involved in the biosynthesis of ADP-glucose, a building block required for the elongation reactions to produce glycogen. Catalyzes the reaction between ATP and alpha-D-glucose 1-phosphate (G1P) to produce pyrophosphate and ADP-Glc. This chain is Glucose-1-phosphate adenylyltransferase, found in Thermodesulfovibrio yellowstonii (strain ATCC 51303 / DSM 11347 / YP87).